Reading from the N-terminus, the 394-residue chain is Ribose-phosphate pyrophosphokinase 5, chloroplastic (394 aa).

Residues 1 to 33 (MASIVQPSPTFPALNLRRSSLIRPPSSVRFPLK) constitute a chloroplast transit peptide. Mg(2+)-binding residues include D202, H204, D213, and D217. Residues 288 to 303 (GKVAIMVDDMIDTAGT) are binding of phosphoribosylpyrophosphate.

It belongs to the ribose-phosphate pyrophosphokinase family.

The protein localises to the plastid. Its subcellular location is the chloroplast. It carries out the reaction D-ribose 5-phosphate + ATP = 5-phospho-alpha-D-ribose 1-diphosphate + AMP + H(+). In Arabidopsis thaliana (Mouse-ear cress), this protein is Ribose-phosphate pyrophosphokinase 5, chloroplastic (PRS5).